Consider the following 416-residue polypeptide: Enterobactin exporter EntS (416 aa).

At 1–21 the chain is on the cytoplasmic side; the sequence is MNKQSWLLNLSLLKTHPAFRA. Residues 22-42 form a helical membrane-spanning segment; the sequence is VFLARFISIVSLGLLGVAVPV. The Periplasmic segment spans residues 43–55; that stretch reads QIQMMTHSTWLVG. Residues 56-76 form a helical membrane-spanning segment; that stretch reads LSVTLTGGAMFVGLMVGGVLA. Residues 77-83 are Cytoplasmic-facing; it reads DRYERKK. A helical transmembrane segment spans residues 84–104; the sequence is VILLARGTCGIGFIGLCLNAL. Over 105–109 the chain is Periplasmic; sequence LPEPS. A helical membrane pass occupies residues 110–130; it reads LLAIYLLGLWDGFFASLGVTA. The Cytoplasmic portion of the chain corresponds to 131–156; sequence LLAATPALVGRENLMQAGAITMLTVR. Residues 157–177 traverse the membrane as a helical segment; that stretch reads LGSVISPMIGGLLLATGGVAW. A topological domain (periplasmic) is located at residue Asn178. Residues 179-199 form a helical membrane-spanning segment; sequence YGLAAAGTFITLLPLLSLPAL. Residues 200 to 218 are Cytoplasmic-facing; sequence PPPPQPREHPLKSLLAGFR. The chain crosses the membrane as a helical span at residues 219 to 239; sequence FLLASPLVGGIALLGGLLTMA. The Periplasmic portion of the chain corresponds to 240–256; the sequence is SAVRVLYPALADNWQMS. The chain crosses the membrane as a helical span at residues 257–277; sequence AAEIGFLYAAIPLGAAIGALT. Over 278–287 the chain is Cytoplasmic; sequence SGKLAHSARP. The helical transmembrane segment at 288–307 threads the bilayer; sequence GLLMLLSTLGSFLAIGLFGL. At 308-313 the chain is on the periplasmic side; the sequence is MPMWIL. The helical transmembrane segment at 314–336 threads the bilayer; it reads GVVCLALFGWLSAVSSLLQYTML. The Cytoplasmic portion of the chain corresponds to 337 to 356; that stretch reads QTQTPEAMLGRINGLWTAQN. Residues 357-377 form a helical membrane-spanning segment; that stretch reads VTGDAIGAALLGGLGAMMTPV. Ala378 is a topological domain (periplasmic). The chain crosses the membrane as a helical span at residues 379-399; sequence SASASGFGLLIIGVLLLLVLV. At 400 to 416 the chain is on the cytoplasmic side; sequence ELRRFRQTPPQVTASDS.

It belongs to the major facilitator superfamily. EntS (TC 2.A.1.38) family.

The protein localises to the cell inner membrane. Its function is as follows. Component of an export pathway for enterobactin. The polypeptide is Enterobactin exporter EntS (Shigella boydii serotype 4 (strain Sb227)).